The primary structure comprises 587 residues: Probable intramembrane protease YKL100C (587 aa).

Residues 1–85 (MDKYLNSFVD…HSLVFNYATL (85 aa)) are Lumenal-facing. Residues 86 to 106 (VLIASALVVIGSFTSISSIPF) traverse the membrane as a helical segment. Topologically, residues 107–156 (TALPPTREHSLFDPTDFDVDHDCHVIYRENDEDKKKKKKSKRFFDMMDEK) are cytoplasmic. The helical transmembrane segment at 157–177 (HAIILPLTSGCTLLALYFVIK) threads the bilayer. Residues 178–192 (KLHLNWLKYVVKILN) lie on the Lumenal side of the membrane. A helical membrane pass occupies residues 193–213 (FNITLLNIPAGTFVYSYFLNS). Residues 214–303 (LFRNLSHLAS…KSKRQISNMY (90 aa)) lie on the Cytoplasmic side of the membrane. A helical transmembrane segment spans residues 304-324 (LNSALIVSFVLSIVSTVYFYL). Over 325–328 (SPND) the chain is Lumenal. A helical transmembrane segment spans residues 329 to 349 (WLISNAVSMNMAIWSIAQLKL). Residues 350–351 (KN) are Cytoplasmic-facing. Residues 352 to 372 (LKSGALILIALFFYDICFVFG) form a helical membrane-spanning segment. Residue aspartate 366 is part of the active site. Residues 373 to 401 (TDVMVTVATNLDIPVKLSLPVKFNTAQNN) are Lumenal-facing. Residues 402–422 (FNFSILGLGDIALPGMFIAMC) traverse the membrane as a helical segment. The active site involves aspartate 411. At 423 to 450 (YKYDIWKWHLDHDDTEFHFLNWSYVGKY) the chain is on the cytoplasmic side. Residues 451-471 (FITAMVSYVASLVSAMVSLSI) traverse the membrane as a helical segment. Over 472–475 (FNTA) the chain is Lumenal. A helical transmembrane segment spans residues 476–496 (QPALLYIVPSLLISTILVACW). The PAL signature appears at 477 to 479 (PAL). Over 497 to 587 (NKDFKQFWNF…EEDLLDDESS (91 aa)) the chain is Cytoplasmic. A disordered region spans residues 561–587 (EFVQEEDLSDSSEEELSEEDLLDDESS).

The protein belongs to the peptidase A22B family.

The protein localises to the membrane. It localises to the endoplasmic reticulum membrane. Its function is as follows. May act as intramembrane protease. This chain is Probable intramembrane protease YKL100C, found in Saccharomyces cerevisiae (strain ATCC 204508 / S288c) (Baker's yeast).